The sequence spans 185 residues: Signal peptidase complex subunit 3 (185 aa).

Over methionine 1–threonine 12 the chain is Cytoplasmic. A helical; Signal-anchor for type II membrane protein transmembrane segment spans residues phenylalanine 13 to isoleucine 34. At glutamine 35–lysine 185 the chain is on the lumenal side. Asparagine 148 is a glycosylation site (N-linked (GlcNAc...) asparagine).

Belongs to the SPCS3 family. As to quaternary structure, component of the signal peptidase complex (SPC) composed of a catalytic subunit sec11 and three accessory subunits spc1, spc2 and spc3. The complex induces a local thinning of the ER membrane which is used to measure the length of the signal peptide (SP) h-region of protein substrates. This ensures the selectivity of the complex towards h-regions shorter than 18-20 amino acids. SPC associates with the translocon complex.

It is found in the endoplasmic reticulum membrane. In terms of biological role, essential component of the signal peptidase complex (SPC) which catalyzes the cleavage of N-terminal signal sequences from nascent proteins as they are translocated into the lumen of the endoplasmic reticulum. Essential for the SPC catalytic activity, possibly by stabilizing and positioning the active center of the complex close to the lumenal surface. Essential for viability. The protein is Signal peptidase complex subunit 3 (spc3) of Schizosaccharomyces pombe (strain 972 / ATCC 24843) (Fission yeast).